We begin with the raw amino-acid sequence, 295 residues long: MAELPGQIRHIGGRMSQLLEQIYGFSRRSLFRVISMGPIPCHIAFIMDGNRRYAKKCGLLDGSGHKAGFSALMSMLQYCYELGIKYVTIYAFSIDNFRRKPEEVESVMDLMLEKIKSLLEKESIVHQYGIRVYFIGNLALLNDQVRAAAEKVMKATAKNSRVVLLICIAYNSTDEIVQAVKKSCINKSDNIEASNYKHEDSDSDIEGTDMENQEKKIQLVDIEENMQMSVAPNPDILIRSSGETRLSNFLLWQTGNTQLCSPAALWPEIGLRHLLWAILNFQRNHSYLEKRKKQL.

It belongs to the UPP synthase family. It depends on Mg(2+) as a cofactor.

Its pathway is protein modification; protein glycosylation. Functionally, catalyzes cis-prenyl chain elongation to produce the polyprenyl backbone of dolichol, a glycosyl carrier-lipid required for the biosynthesis of several classes of glycoprotein. In Arabidopsis thaliana (Mouse-ear cress), this protein is Dehydrodolichyl diphosphate synthase 6.